Consider the following 404-residue polypeptide: Nesprin-4 (404 aa).

Disordered regions lie at residues 1–91 (MALS…GGKH) and 277–347 (GQRG…GAPD). The Cytoplasmic segment spans residues 1-355 (MALSLPLGPR…PDPASRQPLT (355 aa)). Polar residues predominate over residues 39–52 (EESTSPEQAQTLGQ). Residues 307–320 (HQKRLARHQRHSLL) show a composition bias toward basic residues. The KASH domain occupies 347–404 (DPASRQPLTFLLILFLLFLLLVGAMFLLPASGGPCCSHARIPRTPYLVLSYVNGLPPV). A helical; Anchor for type IV membrane protein membrane pass occupies residues 356–376 (FLLILFLLFLLLVGAMFLLPA). Residues 377–404 (SGGPCCSHARIPRTPYLVLSYVNGLPPV) lie on the Perinuclear space side of the membrane.

This sequence belongs to the nesprin family. As to quaternary structure, core component of LINC complexes which are composed of inner nuclear membrane SUN domain-containing proteins coupled to outer nuclear membrane KASH domain-containing nesprins. SUN and KASH domain-containing proteins seem to bind each other promiscuously; however, differentially expression of LINC complex constituents can give rise to specific assemblies. Probably part of a SUN1-containing LINC complex. Interacts with kinesins KIF5B and KLC1. The disulfid bond with SUN1 or SUN2 is required for stability of the respective LINC complex under tensile forces.

The protein localises to the nucleus outer membrane. Its function is as follows. As a component of the LINC (LInker of Nucleoskeleton and Cytoskeleton) complex, involved in the connection between the nuclear lamina and the cytoskeleton. The nucleocytoplasmic interactions established by the LINC complex play an important role in the transmission of mechanical forces across the nuclear envelope and in nuclear movement and positioning. Behaves as a kinesin cargo, providing a functional binding site for kinesin-1 at the nuclear envelope. Hence may contribute to the establishment of secretory epithelial morphology by promoting kinesin-dependent apical migration of the centrosome and Golgi apparatus and basal localization of the nucleus. The chain is Nesprin-4 (SYNE4) from Homo sapiens (Human).